A 156-amino-acid polypeptide reads, in one-letter code: Small ribosomal subunit protein uS7 (156 aa).

It belongs to the universal ribosomal protein uS7 family. Part of the 30S ribosomal subunit. Contacts proteins S9 and S11.

Its function is as follows. One of the primary rRNA binding proteins, it binds directly to 16S rRNA where it nucleates assembly of the head domain of the 30S subunit. Is located at the subunit interface close to the decoding center, probably blocks exit of the E-site tRNA. This is Small ribosomal subunit protein uS7 from Desulforudis audaxviator (strain MP104C).